A 361-amino-acid polypeptide reads, in one-letter code: 3-dehydroquinate synthase (361 aa).

It belongs to the archaeal-type DHQ synthase family.

It catalyses the reaction 2-amino-2,3,7-trideoxy-D-lyxo-hept-6-ulosonate + NAD(+) + H2O = 3-dehydroquinate + NH4(+) + NADH + H(+). In terms of biological role, catalyzes the oxidative deamination and cyclization of 2-amino-3,7-dideoxy-D-threo-hept-6-ulosonic acid (ADH) to yield 3-dehydroquinate (DHQ), which is fed into the canonical shikimic pathway of aromatic amino acid biosynthesis. This chain is 3-dehydroquinate synthase (aroB'), found in Methanocaldococcus jannaschii (strain ATCC 43067 / DSM 2661 / JAL-1 / JCM 10045 / NBRC 100440) (Methanococcus jannaschii).